A 189-amino-acid chain; its full sequence is Peptidyl-tRNA hydrolase (189 aa).

A tRNA-binding site is contributed by Tyr-16. The Proton acceptor role is filled by His-21. The tRNA site is built by Phe-67, Asn-69, and Asn-115.

The protein belongs to the PTH family. As to quaternary structure, monomer.

The protein localises to the cytoplasm. The enzyme catalyses an N-acyl-L-alpha-aminoacyl-tRNA + H2O = an N-acyl-L-amino acid + a tRNA + H(+). Hydrolyzes ribosome-free peptidyl-tRNAs (with 1 or more amino acids incorporated), which drop off the ribosome during protein synthesis, or as a result of ribosome stalling. Its function is as follows. Catalyzes the release of premature peptidyl moieties from peptidyl-tRNA molecules trapped in stalled 50S ribosomal subunits, and thus maintains levels of free tRNAs and 50S ribosomes. The protein is Peptidyl-tRNA hydrolase of Legionella pneumophila (strain Paris).